We begin with the raw amino-acid sequence, 338 residues long: NLP effector protein 6 (338 aa).

A signal peptide spans 1–19; the sequence is MRFTTIFWISLTVLATVRA. The tract at residues 68-119 is disordered; that stretch reads LTLSPSASSPAKRNVTLPPDTTMRPDPRQTEPPTEAPTPASTPAPTPDPGPW. N-linked (GlcNAc...) asparagine glycosylation occurs at Asn81. The segment covering 101 to 117 has biased composition (pro residues); it reads TEAPTPASTPAPTPDPG. Residues 205-215 carry the Conserved undecapeptide motif I motif; that stretch reads AIMYSWYFPKD. Positions 222-227 match the Hepta-peptide GHRHDWE motif II motif; sequence GHRHDW.

This sequence belongs to the Necrosis inducing protein (NPP1) family.

The protein resides in the secreted. Functionally, secreted effector that contributes strongly to virulence during infection by P.capsici. Causes large necrotic areas in both host C.annuum and non-host N.benthamiana. This chain is NLP effector protein 6, found in Phytophthora capsici.